The chain runs to 79 residues: RNA-binding protein Hfq (79 aa).

In terms of domain architecture, Sm spans 10–70 (DAFLNHVRKT…ISTIMPAQPI (61 aa)).

It belongs to the Hfq family. As to quaternary structure, homohexamer.

RNA chaperone that binds small regulatory RNA (sRNAs) and mRNAs to facilitate mRNA translational regulation in response to envelope stress, environmental stress and changes in metabolite concentrations. Also binds with high specificity to tRNAs. This is RNA-binding protein Hfq from Ruegeria pomeroyi (strain ATCC 700808 / DSM 15171 / DSS-3) (Silicibacter pomeroyi).